The primary structure comprises 404 residues: MKPKHILLAYSGGLDTSTALHFLKRHFDCRVTAYCANLGQKEDWERMKRRAAIAGADELVIEDLRETFIGDFVFPALKANASYERDYLLGTPLARPAIVKGLIEYARKHDVDCLSHGCTQKGNDQVRFEMAAKILAPDLPTVAPWRIWSLQSREDLFAYCQQHGIPVESRPDNLLSHDENLVHITTEGDYLESVANAFDWRDANWITPPTQAPDAIETITLGFRRGVPVSVDGAALGPVELVERLNEAGARNGVGFQDIIENRINGLKVRGVFENPALTILHAAHRKLEKITLGRDVERLRNLVSDDYGDIVYRGLWFSDERLCLQALIDESQKYVSGDVKVQLYKGSCTPCAVESEQSLYSRELVTLHAGRAISGEDATGFLNTLGLRIGIEAARAGNTGAGA.

ATP is bound by residues Ala-9–Ser-17 and Ala-36. Tyr-87 is an L-citrulline binding site. Gly-117 provides a ligand contact to ATP. Residues Thr-119, Asn-123, and Asp-124 each contribute to the L-aspartate site. Asn-123 lines the L-citrulline pocket. L-citrulline is bound by residues Arg-127, Ser-176, and Glu-261.

Belongs to the argininosuccinate synthase family. Type 1 subfamily. In terms of assembly, homotetramer.

It localises to the cytoplasm. The enzyme catalyses L-citrulline + L-aspartate + ATP = 2-(N(omega)-L-arginino)succinate + AMP + diphosphate + H(+). Its pathway is amino-acid biosynthesis; L-arginine biosynthesis; L-arginine from L-ornithine and carbamoyl phosphate: step 2/3. This chain is Argininosuccinate synthase, found in Burkholderia pseudomallei (strain K96243).